Reading from the N-terminus, the 267-residue chain is Type III pantothenate kinase (267 aa).

6 to 13 (DVRNTHTT) serves as a coordination point for ATP. 109 to 112 (GADR) contributes to the substrate binding site. The active-site Proton acceptor is the D111. D131 contributes to the K(+) binding site. S134 contacts ATP. Substrate is bound at residue T186.

This sequence belongs to the type III pantothenate kinase family. As to quaternary structure, homodimer. It depends on NH4(+) as a cofactor. K(+) serves as cofactor.

It is found in the cytoplasm. The catalysed reaction is (R)-pantothenate + ATP = (R)-4'-phosphopantothenate + ADP + H(+). The protein operates within cofactor biosynthesis; coenzyme A biosynthesis; CoA from (R)-pantothenate: step 1/5. Catalyzes the phosphorylation of pantothenate (Pan), the first step in CoA biosynthesis. The sequence is that of Type III pantothenate kinase from Mycobacterium sp. (strain JLS).